The chain runs to 2347 residues: Proto-oncogene tyrosine-protein kinase ROS (2347 aa).

An N-terminal signal peptide occupies residues 1–27 (MKNIYCLIPKLVNFATLGCLWISVVQC). The Extracellular portion of the chain corresponds to 28-1859 (TVLNSCLKSC…LVGDDFWIPE (1832 aa)). N-linked (GlcNAc...) asparagine glycans are attached at residues Asn-52, Asn-114, and Asn-123. 2 Fibronectin type-III domains span residues 101–196 (LPTA…VPET) and 197–285 (APLI…SSSA). N-linked (GlcNAc...) asparagine glycans are attached at residues Asn-324, Asn-352, Asn-396, Asn-471, Asn-607, Asn-628, Asn-706, Asn-714, Asn-732, Asn-939, Asn-961, Asn-1015, Asn-1087, Asn-1090, Asn-1095, Asn-1211, Asn-1272, Asn-1330, Asn-1458, Asn-1461, Asn-1474, Asn-1499, Asn-1565, Asn-1669, Asn-1715, Asn-1738, and Asn-1808. Positions 557 to 671 (LPGRPQELSV…EPSVGTTLVP (115 aa)) constitute a Fibronectin type-III 3 domain. Fibronectin type-III domains are found at residues 947 to 1042 (IPDS…TVPS) and 1043 to 1150 (APEN…TSEI). 4 consecutive Fibronectin type-III domains span residues 1450–1556 (DTVE…TKNG), 1557–1656 (VPEA…VEMF), 1658–1751 (TPEK…TKAG), and 1752–1854 (VPNK…VGDD). Residues 1860 to 1882 (TSFILTIIVGIFLVVTIPLTFVW) form a helical membrane-spanning segment. Residues 1883 to 2347 (HRRLKNQKSA…THSGYGDGSD (465 aa)) lie on the Cytoplasmic side of the membrane. The 278-residue stretch at 1945-2222 (LTLRLLLGSG…DQLQLFRNFF (278 aa)) folds into the Protein kinase domain. ATP is bound by residues 1951 to 1959 (LGSGAFGEV) and Lys-1980. Asp-2079 (proton acceptor) is an active-site residue. The residue at position 2274 (Tyr-2274) is a Phosphotyrosine; by autocatalysis. The segment at 2284–2311 (GEEKSEGPLGSQESESCGLRKEEKEPHA) is disordered. The span at 2301–2311 (GLRKEEKEPHA) shows a compositional bias: basic and acidic residues. Residue Tyr-2334 is modified to Phosphotyrosine; by autocatalysis.

Belongs to the protein kinase superfamily. Tyr protein kinase family. Insulin receptor subfamily. In terms of assembly, interacts with PTPN6 (via SH2 1 domain); the interaction is direct and promotes ROS1 dephosphorylation. Interacts with PTPN11; may activate the PI3 kinase-mTOR signaling pathway. Interacts with VAV3; constitutive interaction mediating VAV3 phosphorylation. In terms of processing, phosphorylated. Probably autophosphorylates. Phosphorylation at Tyr-2274 is required for the interaction with PTPN6 that mediates ROS1 dephosphorylation. Phosphorylation at Tyr-2274 stimulates the kinase activity and the activation of the ERK1 signaling cascade. Phosphorylation at Tyr-2274 and/or Tyr-2334 recruits PTPN11. Expressed in brain. Expression is increased in primary gliomas.

It is found in the cell membrane. The catalysed reaction is L-tyrosyl-[protein] + ATP = O-phospho-L-tyrosyl-[protein] + ADP + H(+). With respect to regulation, inhibited by dephosphorylation by PTPN6. In terms of biological role, receptor tyrosine kinase (RTK) that plays a role in epithelial cell differentiation and regionalization of the proximal epididymal epithelium. NELL2 is an endogenous ligand for ROS1. Upon endogenous stimulation by NELL2, ROS1 activates the intracellular signaling pathway and triggers epididymal epithelial differentiation and subsequent sperm maturation. May activate several downstream signaling pathways related to cell differentiation, proliferation, growth and survival including the PI3 kinase-mTOR signaling pathway. Mediates the phosphorylation of PTPN11, an activator of this pathway. May also phosphorylate and activate the transcription factor STAT3 to control anchorage-independent cell growth. Mediates the phosphorylation and the activation of VAV3, a guanine nucleotide exchange factor regulating cell morphology. May activate other downstream signaling proteins including AKT1, MAPK1, MAPK3, IRS1 and PLCG2. This Homo sapiens (Human) protein is Proto-oncogene tyrosine-protein kinase ROS (ROS1).